Consider the following 378-residue polypeptide: Acetylornithine deacetylase (378 aa).

His-76 serves as a coordination point for Zn(2+). Asp-78 is a catalytic residue. Position 108 (Asp-108) interacts with Zn(2+). Glu-140 is a catalytic residue. Residues Glu-141, Glu-165, and His-351 each coordinate Zn(2+).

Belongs to the peptidase M20A family. ArgE subfamily. Homodimer. The cofactor is Zn(2+). Requires Co(2+) as cofactor. It depends on glutathione as a cofactor.

The protein localises to the cytoplasm. The enzyme catalyses N(2)-acetyl-L-ornithine + H2O = L-ornithine + acetate. It participates in amino-acid biosynthesis; L-arginine biosynthesis; L-ornithine from N(2)-acetyl-L-ornithine (linear): step 1/1. In terms of biological role, catalyzes the hydrolysis of the amide bond of N(2)-acetylated L-amino acids. Cleaves the acetyl group from N-acetyl-L-ornithine to form L-ornithine, an intermediate in L-arginine biosynthesis pathway, and a branchpoint in the synthesis of polyamines. This is Acetylornithine deacetylase from Vibrio campbellii (strain ATCC BAA-1116).